A 138-amino-acid polypeptide reads, in one-letter code: Large ribosomal subunit protein eL32 (138 aa).

The protein belongs to the eukaryotic ribosomal protein eL32 family.

The protein is Large ribosomal subunit protein eL32 (rpl32e) of Saccharolobus solfataricus (strain ATCC 35092 / DSM 1617 / JCM 11322 / P2) (Sulfolobus solfataricus).